Consider the following 475-residue polypeptide: Phosphoethanolamine N-methyltransferase 1 (475 aa).

This sequence belongs to the class I-like SAM-binding methyltransferase superfamily.

The catalysed reaction is phosphoethanolamine + S-adenosyl-L-methionine = N-methylethanolamine phosphate + S-adenosyl-L-homocysteine + H(+). It participates in phospholipid metabolism; phosphatidylcholine biosynthesis; phosphocholine from phosphoethanolamine. Its activity is regulated as follows. Feedback inhibition by phosphatidylcholine. In terms of biological role, catalyzes the first step in the synthesis of phosphocholine by converting phosphoethanolamine into phospho-monomethylethanolamine (N-methylethanolamine phosphate). Phosphocholine is a precursor for phosphatidylcholine, a major component in membranes and a precursor itself in the production of glycoconjugates secreted by parasitic nematodes to avoid host immune responses. The chain is Phosphoethanolamine N-methyltransferase 1 from Caenorhabditis elegans.